The primary structure comprises 668 residues: Potassium voltage-gated channel subfamily KQT member 1 (668 aa).

Over 1–119 the chain is Cytoplasmic; sequence MDTASSPPSA…YNFLERPTGW (119 aa). Position 27 is a phosphoserine; by PKA (Ser-27). A helical membrane pass occupies residues 120–141; it reads KCFVYHFTVFLIVLVCLIFSVL. The Extracellular segment spans residues 142–152; that stretch reads STIEQYAALAT. Residues 153–175 form a helical membrane-spanning segment; that stretch reads GTLFWMEIVLVVFFGTEYVVRLW. Residues 176–191 are Cytoplasmic-facing; the sequence is SAGCRSKYVGIWGRLR. A helical transmembrane segment spans residues 192–217; the sequence is FARKPISIIDLIVVVASMVVLCVGSK. Residues 218–225 are Extracellular-facing; that stretch reads GQVFATSA. A helical; Voltage-sensor transmembrane segment spans residues 226–241; it reads IRGIRFLQILRMLHVD. The interaction with KCNE3 stretch occupies residues 237 to 245; that stretch reads MLHVDRQGG. The Cytoplasmic segment spans residues 242 to 259; sequence RQGGTWRLLGSVVFIHRQ. Position 243 (Gln-243) interacts with a 1,2-diacyl-sn-glycero-3-phospho-(1D-myo-inositol-4,5-bisphosphate). A helical transmembrane segment spans residues 260–282; sequence ELITTLYIGFLGLIFSSYFVYLA. Residues 283 to 298 are Extracellular-facing; that stretch reads EKDAVNESGRIEFGSY. Asn-288 carries N-linked (GlcNAc...) asparagine glycosylation. An intramembrane region (pore-forming) is located at residues 299–319; the sequence is ADALWWGVVTVTTIGYGDKVP. Over 320–321 the chain is Extracellular; the sequence is QT. Residues 322-347 form a helical membrane-spanning segment; sequence WVGKTIASCFSVFAISFFALPAGILG. Residues 348-668 are Cytoplasmic-facing; the sequence is SGFALKVQQK…VPQTGPDEGS (321 aa). The segment at 369-381 is interaction with CALM; sequence AAASLIQTAWRCY. Ser-406 and Ser-408 each carry phosphoserine. The segment at 514–528 is interaction with CALM; calcium-dependent; sequence KVIRRMQYFVAKKKF. An interaction with KCNE1 C-terminus region spans residues 534–571; sequence PYDVRDVIEQYSQGHLNLMVRIKELQRRLDQSIGKPSL. A coiled-coil region spans residues 584–620; the sequence is SNTIGARLNRVEDKVTQLDQRLVIITDMLHQLLSMQQ. The interval 587-615 is interaction with AKAP9; that stretch reads IGARLNRVEDKVTQLDQRLVIITDMLHQL. The segment at 588–619 is C-terminal assembly domain (tetramerization); sequence GARLNRVEDKVTQLDQRLVIITDMLHQLLSMQ.

Belongs to the potassium channel family. KQT (TC 1.A.1.15) subfamily. Kv7.1/KCNQ1 sub-subfamily. As to quaternary structure, tetramer. Heterotetramer with KCNE1; form the native cardiac channel I(Ks) which increases the amplitude and slows down the activation kinetics of outward potassium current and targets to the membrane raft. Interacts (via C-terminus) with CALM; forms a heterooctameric structure (with 4:4 KCNQ1:CALM stoichiometry) in a calcium-independent manner. Interacts with AKAP9; targets protein kinase A (PKA) catalytic and regulatory subunits and protein phosphatase 1 (PP1) to the KCNQ1-KCNE1 complex, allowing PKA-mediated phosphorylation and increase of delayed rectifier potassium channel activity. Interacts with KCNE2; form an heterooligomer complex that targets to the membrane raft and leading to currents with an apparently instantaneous activation, a rapid deactivation process and a linear current-voltage relationship and decreases the amplitude of the outward current. Interacts with AP2M1; mediates estrogen-induced internalization via clathrin-coated vesicles. Interacts with NEDD4L; promotes internalization and decreases I(Ks) currents. Interacts with USP2; counteracts the NEDD4L-specific down-regulation of I(Ks) and restore plasma membrane localization. Heterotetramer with KCNQ5; has a voltage-gated potassium channel activity. Interacts with KCNE3; four KCNE3 molecules are bound to one KCNQ1 tetramer (4:4 KCNQ1:KCNE3 stoichiometry); alters membrane raft localization; affects KCNQ1 structure and gating properties. Interacts with KCNE4; impairs KCNQ1 localization in lipid rafts and inhibits voltage-gated potassium channel activity. Interacts with KCNE5; impairs KCNQ1 localization in lipid rafts and only conducts current upon strong and continued depolarization. Interacts with SLC5A3; forms coregulatory channel-transporter complexes that modulate Na(+)-coupled myo-inositol influx through the transporter. Post-translationally, phosphorylation at Ser-27 by PKA; increases delayed rectifier potassium channel activity of the KCNQ1-KCNE1 complex through a macromolecular complex that includes PKA, PP1, and the targeting protein AKAP9. Ubiquitinated by NEDD4L; promotes internalization. The ubiquitinylated form is internalized through a clathrin-mediated endocytosis by interacting with AP2M1 and is recycled back to the cell membrane via RAB4A and RAB11A. In terms of processing, deubiquitinated by USP2; counteracts the NEDD4L-specific down-regulation of I(Ks) and restores the membrane localization. Expressed in heart, kidney and salivary glands. Detected in the cochlea. Almost undetectable in brain, skeletal muscle and liver. Widely expressed in embryonic and neonatal tissues. Expressed in choroid plexus epithelium (at protein level).

Its subcellular location is the cell membrane. The protein localises to the cytoplasmic vesicle membrane. It localises to the early endosome. It is found in the membrane raft. The protein resides in the endoplasmic reticulum. Its subcellular location is the basolateral cell membrane. The protein localises to the apical cell membrane. The catalysed reaction is K(+)(in) = K(+)(out). PIP2 molecule is essential to activate KCNQ channels by inducing the coupling of the voltage-sensing domain (VSD) and the pore-forming domain (PD). Upon channel activation, PIP2 disrupts the VSD-calmodulin/CALM interactions, causing the release of CALM from the VSD which triggers the opening of the gate. Calcium potentiates KCNQ1 channel current through calcium-bound CALM. Calcium-bound CALM competes with PIP2 to stabilize the channel open state. Functionally, pore-forming subunit of the voltage-gated potassium (Kv) channel involved in the regulation of cardiomyocyte excitability and important in normal development and functions of myocardium, inner ear, stomach and colon. Associates with KCNE beta subunits that modulates current kinetics. Induces a voltage-dependent by rapidly activating and slowly deactivating potassium-selective outward current. Also promotes a delayed voltage activated potassium current showing outward rectification characteristic. During beta-adrenergic receptor stimulation participates in cardiac increases the amplitude and slows down the activation kinetics of outward potassium current I(Ks). Muscarinic agonist oxotremorine-M strongly suppresses KCNQ1/KCNE1 current. When associated with KCNE3, forms the potassium channel that is important for cyclic AMP-stimulated intestinal secretion of chloride ions. This interaction with KCNE3 is reduced by 17beta-estradiol, resulting in the reduction of currents. During conditions of increased substrate load, maintains the driving force for proximal tubular and intestinal sodium ions absorption, gastric acid secretion, and cAMP-induced jejunal chloride ions secretion. Allows the provision of potassium ions to the luminal membrane of the secretory canaliculus in the resting state as well as during stimulated acid secretion. When associated with KCNE2, forms a heterooligomer complex leading to currents with an apparently instantaneous activation, a rapid deactivation process and a linear current-voltage relationship and decreases the amplitude of the outward current. When associated with KCNE4, inhibits voltage-gated potassium channel activity. When associated with KCNE5, this complex only conducts current upon strong and continued depolarization. Also forms a heterotetramer with KCNQ5; has a voltage-gated potassium channel activity. Binds with phosphatidylinositol 4,5-bisphosphate. KCNQ1-KCNE2 channel associates with Na(+)-coupled myo-inositol symporter in the apical membrane of choroid plexus epithelium and regulates the myo-inositol gradient between blood and cerebrospinal fluid with an impact on neuron excitability. The sequence is that of Potassium voltage-gated channel subfamily KQT member 1 from Mus musculus (Mouse).